The chain runs to 398 residues: Acetate kinase (398 aa).

Position 8 (Asn8) interacts with Mg(2+). Lys15 is a binding site for ATP. Residue Arg89 participates in substrate binding. Asp146 serves as the catalytic Proton donor/acceptor. ATP is bound by residues 206 to 210, 283 to 285, and 331 to 335; these read HIGNG, DMR, and GMGEN. Mg(2+) is bound at residue Glu383.

Belongs to the acetokinase family. Homodimer. Mg(2+) is required as a cofactor. It depends on Mn(2+) as a cofactor.

The protein localises to the cytoplasm. The catalysed reaction is acetate + ATP = acetyl phosphate + ADP. It participates in metabolic intermediate biosynthesis; acetyl-CoA biosynthesis; acetyl-CoA from acetate: step 1/2. Functionally, catalyzes the formation of acetyl phosphate from acetate and ATP. Can also catalyze the reverse reaction. This chain is Acetate kinase, found in Streptococcus pyogenes serotype M28 (strain MGAS6180).